The chain runs to 172 residues: NADH-ubiquinone oxidoreductase chain 6 (172 aa).

5 consecutive transmembrane segments (helical) span residues 1 to 21 (MAFY…AIAS), 24 to 44 (APYF…GILV), 53 to 73 (LILF…SAAL), 86 to 106 (VVFW…GFLL), and 140 to 160 (GKML…VLEV).

The protein belongs to the complex I subunit 6 family. In terms of assembly, core subunit of respiratory chain NADH dehydrogenase (Complex I) which is composed of 45 different subunits.

It localises to the mitochondrion inner membrane. It catalyses the reaction a ubiquinone + NADH + 5 H(+)(in) = a ubiquinol + NAD(+) + 4 H(+)(out). Functionally, core subunit of the mitochondrial membrane respiratory chain NADH dehydrogenase (Complex I) which catalyzes electron transfer from NADH through the respiratory chain, using ubiquinone as an electron acceptor. Essential for the catalytic activity and assembly of complex I. The polypeptide is NADH-ubiquinone oxidoreductase chain 6 (mt-nd6) (Danio rerio (Zebrafish)).